Consider the following 106-residue polypeptide: Small ribosomal subunit protein uS10 (106 aa).

The protein belongs to the universal ribosomal protein uS10 family. In terms of assembly, part of the 30S ribosomal subunit.

Involved in the binding of tRNA to the ribosomes. The sequence is that of Small ribosomal subunit protein uS10 from Synechococcus sp. (strain WH7803).